The primary structure comprises 679 residues: Glycine--tRNA ligase beta subunit (679 aa).

It belongs to the class-II aminoacyl-tRNA synthetase family. In terms of assembly, tetramer of two alpha and two beta subunits.

Its subcellular location is the cytoplasm. It carries out the reaction tRNA(Gly) + glycine + ATP = glycyl-tRNA(Gly) + AMP + diphosphate. The polypeptide is Glycine--tRNA ligase beta subunit (Streptococcus pyogenes serotype M2 (strain MGAS10270)).